The following is a 599-amino-acid chain: mRNA export factor MEX67 (599 aa).

Ser2 bears the N-acetylserine mark. LRR repeat units lie at residues 163 to 184 (IVES…STLA) and 189 to 210 (NLKN…EVWK). In terms of domain architecture, LRRCT spans 224–262 (NPITTDKLYRTEMLRLFPKLVVLDNVIVRDEQKLQTVYS). The region spanning 280–467 (SSTDFATNFL…VIIASDLLTV (188 aa)) is the NTF2 domain. The disordered stretch occupies residues 408-439 (KPELESNKKTGKNNYQKNRRYNHGYNSTSNNK). Positions 546-599 (PVQLELLNKLHLETKLNAEYTFMLAEQSNWNYEVAIKGFQSSMNGIPREAFVQF) constitute a TAP-C domain.

The protein belongs to the NXF family. Interacts with nucleoporin complex NUP84 and MTR2. Interacts with MIP6.

The protein localises to the nucleus. Its subcellular location is the cytoplasm. In terms of biological role, involved in the export of mRNA from the nucleus to the cytoplasm. This Saccharomyces cerevisiae (strain ATCC 204508 / S288c) (Baker's yeast) protein is mRNA export factor MEX67 (MEX67).